A 197-amino-acid chain; its full sequence is Imidazoleglycerol-phosphate dehydratase (197 aa).

It belongs to the imidazoleglycerol-phosphate dehydratase family.

The protein resides in the cytoplasm. It catalyses the reaction D-erythro-1-(imidazol-4-yl)glycerol 3-phosphate = 3-(imidazol-4-yl)-2-oxopropyl phosphate + H2O. It participates in amino-acid biosynthesis; L-histidine biosynthesis; L-histidine from 5-phospho-alpha-D-ribose 1-diphosphate: step 6/9. The chain is Imidazoleglycerol-phosphate dehydratase from Pseudomonas syringae pv. syringae (strain B728a).